The primary structure comprises 729 residues: Serine/threonine-protein kinase TBK1 (729 aa).

Residues 9-310 (WLLSDILGQG…ETSDILHRMV (302 aa)) form the Protein kinase domain. 15–23 (LGQGATANV) provides a ligand contact to ATP. K30 is covalently cross-linked (Glycyl lysine isopeptide (Lys-Gly) (interchain with G-Cter in ubiquitin)). K38 lines the ATP pocket. D135 acts as the Proton acceptor in catalysis. S172 carries the phosphoserine; by autocatalysis and IKKB modification. Residues 309-385 (MVIHVFSLQQ…ENPIFVVSRE (77 aa)) enclose the Ubiquitin-like domain. K401 participates in a covalent cross-link: Glycyl lysine isopeptide (Lys-Gly) (interchain with G-Cter in ubiquitin). Coiled coils occupy residues 407–657 (DLDG…LQET) and 658–713 (LPQK…ILER). K607 bears the N6-methyllysine; by SETD4 mark. An interaction with AZI2, TANK and TBKBP1 region spans residues 621-729 (RKMLHLRKQL…DGGLRNVDCL (109 aa)). Residue K670 forms a Glycyl lysine isopeptide (Lys-Gly) (interchain with G-Cter in ubiquitin) linkage. S716 is modified (phosphoserine).

This sequence belongs to the protein kinase superfamily. Ser/Thr protein kinase family. I-kappa-B kinase subfamily. As to quaternary structure, homodimer. Interacts with DDX3X, TIRAP and TRAF2. Part of a ternary complex consisting of TANK, TRAF2 and TBK1. Interacts with AZI2, TANK and TBKBP1; these interactions are mutually exclusive and mediate TBK1 activation. Interacts with GSK3B; this interaction promotes TBK1 self-association and autophosphorylation. Interacts with SIKE1; SIKE1 is associated with TBK1 under physiological condition and dissociated from TBK1 upon viral infection or TLR3 stimulation. Interacts with IRF3, leading to IRF3 phosphorylation. Interacts with RIGI. Interacts with CYLD. Interacts with OPTN and TRAF3. Interacts with SRC. Interacts with the exocyst complex subunit SEC5/EXOC2; this interaction is sufficient to trigger TBK1 activity. Interacts with STING1, leading to STING1 phosphorylation. Interacts with IFIT3 (via N-terminus). Interacts with MAVS; interaction only takes place in the presence of IFIT3 and leads to MAVS phosphorylation. Interacts (via protein kinase domain) with TTLL12 (via TTL domain); the interaction prevents MAVS binding to TBK1. Interacts with TICAM1; this interaction is enhanced in the presence of WDFY1 and leads to TICAM1 phosphorylation. Interacts with TRIM26. Interacts with TRIM23. Interacts with TTC4 and IKBKE. Interacts with HNRNPA2B1. Interacts with DDX3X. Interacts with TRIM14. Interacts with CEP170; efficient complex formation may be dependent on the presence of CCDC61. Interacts with TRAF3IP3. Interacts with HSP90AA1; the interaction mediates TBK1 association with TOMM70. Interacts with TAX1BP1. Interacts with kinase IKBKB; the complex interacts with STAT1, leading to phosphorylation of STAT1 on 'Thr-749' by IKBKB. Interacts with ICOS; this interaction is critical for the maturation of T follicular regulatory cells. Interacts with RNF144B; this interaction prevents TBK1 phosphorylation and subsequent activation. Interacts with ASB8; this interaction promotes TBK1 proteasomal degradation. Forms a ternary complex with ZNF268 and SETD4; the interaction with SETD4 is ZNF268-dependent and leads to TBK1 monomethylation, which enhances its interaction with IRF3 and MAVS. (Microbial infection) Interacts with Borna disease virus (BDV) P protein leading to its phosphorylation. In terms of assembly, (Microbial infection) Interacts with Ebola virus protein VP35. As to quaternary structure, (Microbial infection) Interacts with HCV NS3; this interaction leads to inhibition of cellular antiviral response by blocking necessary interactions between the TBK1 and its substrates IRF3 and IRF7. (Microbial infection) Interacts with human herpesvirus 1 protein ICP34.5. In terms of assembly, (Microbial infection) Interacts with Zika virus non-structural protein 1/NS1 and non-structural protein 4B/NS4B. As to quaternary structure, (Microbial infection) Interacts with SARS-CoV-2 non-structural protein 6; this interaction decreases IRF3 phosphorylation by 57%, which leads to reduced IFN-beta (IFNB) production. Interacts with SARS-CoV-2 helicase; this interaction inhibits TBK1 phosphorylation and decreases IRF3 phosphorylation by 75%, which leads to reduced IFN-beta production. Interacts with SARS-CoV-2 M protein; the interaction promotes TBK1 degradation via 'Lys-48'-linked ubiquitination. (Microbial infection) Interacts with human cytomegalovirus protein UL35; this interaction inhibits type I interferon production. In terms of assembly, (Microbial infection) Interacts with heartland virus NSs; this interaction antagonizes TBK1 phosphorylation and inhibits TBK1-IRF3 interaction and thus the establishment of an antiviral state. As to quaternary structure, (Microbial infection) Interacts (via N-terminus) with Severe fever with thrombocytopenia virus (SFTSV) NSs; this interaction antagonizes TBK1 phosphorylation and sequesters TBK1 in NSs-induced cytoplasmic inclusion bodies thereby inhibiting the IFN responses. In terms of processing, autophosphorylation at Ser-172 activates the kinase, and is an essential step for virus-triggered signaling. Phosphorylated by IKBKB/IKKB at Ser-172. Phosphorylation requires homodimerization and ubiquitination at Lys-30 and Lys-401. Dephosphorylated at Ser-172 by PPM1B and this negatively regulates its role in mediating antiviral response. Post-translationally, 'Lys-63'-linked polyubiquitination by MIB1 after RNA virus infection, or by NRDP1 after LPS stimulation at Lys-30 and Lys-401, participates in kinase activation. 'Lys-48'-linked polyubiquitination at Lys-670 by DTX4 leads to proteasomal degradation. 'Lys-48'-linked polyubiquitination by TRAIP also leads to proteasomal degradation. 'Lys-48'-linked polyubiquitination by TRAF7; leading to proteasomal degradation. 'Lys-63'-linked polyubiquitination by RNF128 at Lys-30 and Lys-401 leads to the activation of antiviral responses. 'Lys-48'-linked polyubiquitination after 'lys-33'-linked deubiquitination by USP38 promotes TBK1 degradation. (Microbial infection) Interaction with SARS-CoV-2 M protein induces 'Lys-48'-linked ubiquitination which leads to proteasomal degradation. In terms of processing, (Microbial infection) Deubiquitinated by Epstein-Barr virus BPLF1 on both 'Lys-48' and 'Lys-63'-linked ubiquitin chains; leading to inhibition of type I interfewron production. Post-translationally, monomethylation at Lys-607 by SETD4 maximizes TBK1 activation and promotes efficient interferon signaling. Ubiquitous with higher expression in testis. Expressed in the ganglion cells, nerve fiber layer and microvasculature of the retina.

It is found in the cytoplasm. The catalysed reaction is L-seryl-[protein] + ATP = O-phospho-L-seryl-[protein] + ADP + H(+). The enzyme catalyses L-threonyl-[protein] + ATP = O-phospho-L-threonyl-[protein] + ADP + H(+). In terms of biological role, serine/threonine kinase that plays an essential role in regulating inflammatory responses to foreign agents. Following activation of toll-like receptors by viral or bacterial components, associates with TRAF3 and TANK and phosphorylates interferon regulatory factors (IRFs) IRF3 and IRF7 as well as DDX3X. This activity allows subsequent homodimerization and nuclear translocation of the IRFs leading to transcriptional activation of pro-inflammatory and antiviral genes including IFNA and IFNB. In order to establish such an antiviral state, TBK1 form several different complexes whose composition depends on the type of cell and cellular stimuli. Plays a key role in IRF3 activation: acts by first phosphorylating innate adapter proteins MAVS, STING1 and TICAM1 on their pLxIS motif, leading to recruitment of IRF3, thereby licensing IRF3 for phosphorylation by TBK1. Phosphorylated IRF3 dissociates from the adapter proteins, dimerizes, and then enters the nucleus to induce expression of interferons. Thus, several scaffolding molecules including FADD, TRADD, MAVS, AZI2, TANK or TBKBP1/SINTBAD can be recruited to the TBK1-containing-complexes. Under particular conditions, functions as a NF-kappa-B effector by phosphorylating NF-kappa-B inhibitor alpha/NFKBIA, IKBKB or RELA to translocate NF-Kappa-B to the nucleus. Restricts bacterial proliferation by phosphorylating the autophagy receptor OPTN/Optineurin on 'Ser-177', thus enhancing LC3 binding affinity and antibacterial autophagy. Phosphorylates SMCR8 component of the C9orf72-SMCR8 complex, promoting autophagosome maturation. Phosphorylates ATG8 proteins MAP1LC3C and GABARAPL2, thereby preventing their delipidation and premature removal from nascent autophagosomes. Seems to play a role in energy balance regulation by sustaining a state of chronic, low-grade inflammation in obesity, which leads to a negative impact on insulin sensitivity. Attenuates retroviral budding by phosphorylating the endosomal sorting complex required for transport-I (ESCRT-I) subunit VPS37C. Phosphorylates Borna disease virus (BDV) P protein. Plays an essential role in the TLR3- and IFN-dependent control of herpes virus HSV-1 and HSV-2 infections in the central nervous system. Acts both as a positive and negative regulator of the mTORC1 complex, depending on the context: activates mTORC1 in response to growth factors by catalyzing phosphorylation of MTOR, while it limits the mTORC1 complex by promoting phosphorylation of RPTOR. Acts as a positive regulator of the mTORC2 complex by mediating phosphorylation of MTOR, leading to increased phosphorylation and activation of AKT1. Phosphorylates and activates AKT1. Involved in the regulation of TNF-induced RIPK1-mediated cell death, probably acting via CYLD phosphorylation that in turn controls RIPK1 ubiquitination status. Also participates in the differentiation of T follicular regulatory cells together with the receptor ICOS. The chain is Serine/threonine-protein kinase TBK1 from Homo sapiens (Human).